The sequence spans 545 residues: Chaperonin GroEL (545 aa).

Residues 30 to 33, Lys-51, 87 to 91, Gly-415, 479 to 481, and Asp-495 each bind ATP; these read TLGP, DGTTT, and NAA. The disordered stretch occupies residues 526–545; the sequence is KEDKPDLGNAGAGGNMGGMM. Over residues 535–545 the composition is skewed to gly residues; the sequence is AGAGGNMGGMM.

This sequence belongs to the chaperonin (HSP60) family. As to quaternary structure, forms a cylinder of 14 subunits composed of two heptameric rings stacked back-to-back. Interacts with the co-chaperonin GroES.

It is found in the cytoplasm. It catalyses the reaction ATP + H2O + a folded polypeptide = ADP + phosphate + an unfolded polypeptide.. Together with its co-chaperonin GroES, plays an essential role in assisting protein folding. The GroEL-GroES system forms a nano-cage that allows encapsulation of the non-native substrate proteins and provides a physical environment optimized to promote and accelerate protein folding. The polypeptide is Chaperonin GroEL (Blochmanniella pennsylvanica (strain BPEN)).